We begin with the raw amino-acid sequence, 723 residues long: 1,3-beta-galactosyl-N-acetylhexosamine phosphorylase Cphy0577 (723 aa).

Residue D317 is the Proton donor of the active site.

This sequence belongs to the glycoside hydrolase 112 family.

It catalyses the reaction beta-D-galactosyl-(1-&gt;3)-N-acetyl-D-glucosamine + phosphate = alpha-D-galactose 1-phosphate + N-acetyl-D-glucosamine. Its function is as follows. Reversibly phosphorolyzes beta-D-galactopyranosyl-(1-&gt;3)-N-acetyl-D-glucosamine to form alpha-D-galactopyranose 1-phosphate and acetyl-D-glucosamine. Active towards galacto-N-biose and lacto-N-biose. Does not phosphorolyze galacto-N-tetraose or lacto-N-tetraose. In the reverse reaction has activity toward N-acetyl-D-glucosamine and N-acetyl-D-galactosamine, but not L-rhamnose, D-glucose or D-galactose. The polypeptide is 1,3-beta-galactosyl-N-acetylhexosamine phosphorylase Cphy0577 (Lachnoclostridium phytofermentans (strain ATCC 700394 / DSM 18823 / ISDg) (Clostridium phytofermentans)).